The sequence spans 119 residues: BLOC-1-related complex subunit 8 (119 aa).

Ser109 carries the post-translational modification Phosphoserine.

Belongs to the BORCS8 family. In terms of assembly, component of the BLOC-one-related complex (BORC) which is composed of BLOC1S1, BLOC1S2, BORCS5, BORCS6, BORCS7, BORCS8, KXD1 and SNAPIN.

It localises to the lysosome membrane. In terms of biological role, as part of the BLOC-one-related complex (BORC), it plays a role in the movement and localization of lysosomes at the cell periphery. Associated with the cytosolic face of lysosomes, BORC recruits ARL8B to the lysosomal membrane and couples lysosomes to microtubule plus-end-directed kinesin motors, driving lysosome movement toward the cell periphery. In Homo sapiens (Human), this protein is BLOC-1-related complex subunit 8.